The sequence spans 1192 residues: Chromosome partition protein Smc (1192 aa).

Residue 31 to 38 coordinates ATP; that stretch reads PNGSGKSN. Coiled-coil stretches lie at residues 164–197, 234–292, 333–369, and 396–464; these read AGISRFKAKKVEAERRLERVQTNLTRLGDIVDEV, LTLS…RSEL, SAIADLRKTIAALEVAEAELADVQQKKESIAAKRDVE, and EHEA…DAKV. Positions 522 to 636 constitute an SMC hinge domain; the sequence is KDLVGIVADC…LVDTLATAIG (115 aa). 3 coiled-coil regions span residues 676 to 736, 772 to 902, and 986 to 1030; these read RSEL…AKLH, ELAV…EREA, and GSVN…INAD.

This sequence belongs to the SMC family. Homodimer.

It localises to the cytoplasm. Functionally, required for chromosome condensation and partitioning. This Rhodopirellula baltica (strain DSM 10527 / NCIMB 13988 / SH1) protein is Chromosome partition protein Smc.